The chain runs to 178 residues: Large ribosomal subunit protein uL6 (178 aa).

It belongs to the universal ribosomal protein uL6 family. As to quaternary structure, part of the 50S ribosomal subunit.

This protein binds to the 23S rRNA, and is important in its secondary structure. It is located near the subunit interface in the base of the L7/L12 stalk, and near the tRNA binding site of the peptidyltransferase center. The sequence is that of Large ribosomal subunit protein uL6 from Corynebacterium diphtheriae (strain ATCC 700971 / NCTC 13129 / Biotype gravis).